Consider the following 356-residue polypeptide: Malate dehydrogenase, glyoxysomal (356 aa).

Residues 1–36 (MQPIPDVNQRIARISAHLHPPKSQMEESSALRRANC) constitute a glyoxysome transit peptide. Residues 51-57 (GAAGGIG) and aspartate 77 each bind NAD(+). Substrate-binding residues include arginine 124 and arginine 130. Residues asparagine 137 and 160-162 (ISN) each bind NAD(+). 2 residues coordinate substrate: asparagine 162 and arginine 196. Residue histidine 220 is the Proton acceptor of the active site. Methionine 271 contacts NAD(+).

It belongs to the LDH/MDH superfamily. MDH type 1 family. Homodimer.

It is found in the glyoxysome. The enzyme catalyses (S)-malate + NAD(+) = oxaloacetate + NADH + H(+). The sequence is that of Malate dehydrogenase, glyoxysomal from Citrullus lanatus (Watermelon).